A 396-amino-acid polypeptide reads, in one-letter code: Period circadian protein (396 aa).

Disordered regions lie at residues 27-120 (VTAP…APPV), 167-188 (SGPG…WEGE), 253-275 (GGNG…QYTQ), and 333-362 (SPSS…TSQA). A compositionally biased stretch (gly residues) spans 93–114 (GTSGTGNSGDGGGGGGANGTGS). The segment covering 253 to 262 (GGNGNVGSGN) has biased composition (gly residues). The span at 333 to 342 (SPSSTNTNPN) shows a compositional bias: low complexity.

Forms a heterodimer with timeless (TIM); the complex then translocates into the nucleus. Post-translationally, phosphorylated with a circadian rhythmicity, probably by the double-time protein (dbt). Phosphorylation could be implicated in the stability of per monomer and in the formation of heterodimer per-tim.

It is found in the nucleus. Its subcellular location is the cytoplasm. The protein localises to the perinuclear region. Its function is as follows. Essential for biological clock functions. Determines the period length of circadian and ultradian rhythms; an increase in PER dosage leads to shortened circadian rhythms and a decrease leads to lengthened circadian rhythms. Essential for the circadian rhythmicity of locomotor activity, eclosion behavior, and for the rhythmic component of the male courtship song that originates in the thoracic nervous system. The biological cycle depends on the rhythmic formation and nuclear localization of the TIM-PER complex. Light induces the degradation of TIM, which promotes elimination of PER. Nuclear activity of the heterodimer coordinatively regulates PER and TIM transcription through a negative feedback loop. Behaves as a negative element in circadian transcriptional loop. Does not appear to bind DNA, suggesting indirect transcriptional inhibition. This Drosophila paulistorum (Fruit fly) protein is Period circadian protein (per).